The following is a 750-amino-acid chain: Sulfhydryl oxidase 1 (750 aa).

Positions 1 to 32 (MGRCNRGSGPPSSLLLLLLLLLWLLAVPGASA) are cleaved as a signal peptide. The Thioredoxin domain occupies 39–159 (YSPSDPLTLL…RERLIDALES (121 aa)). Residues C73 and C76 each act as nucleophile in the active site. Disulfide bonds link C73–C76 and C104–C113. N133 and N246 each carry an N-linked (GlcNAc...) asparagine glycan. A disulfide bridge links C396 with C408. One can recognise an ERV/ALR sulfhydryl oxidase domain in the interval 399-506 (SEPHFRGFPC…EDPQFPKVQW (108 aa)). The FAD site is built by R404, W411, and H415. A Phosphoserine modification is found at S429. The cysteines at positions 452 and 455 are disulfide-linked. Residues D454, H458, 481 to 488 (WSSHNRVN), K503, and W506 contribute to the FAD site. A disulfide bridge links C512 with C515. An N-linked (GlcNAc...) asparagine glycan is attached at N578. The disordered stretch occupies residues 578 to 645 (NSTVDLGKPE…REQPRGQWHL (68 aa)). Basic and acidic residues predominate over residues 624-639 (PPEHMAELQTNEREQP). Residues 713 to 733 (ISLCVGLYSLSFMGLLAMYAY) form a helical membrane-spanning segment.

It belongs to the quiescin-sulfhydryl oxidase (QSOX) family. As to quaternary structure, monomer. Requires FAD as cofactor. N-glycosylated. O-glycosylated on Thr and Ser residues.

The protein localises to the golgi apparatus membrane. Its subcellular location is the secreted. The catalysed reaction is 2 R'C(R)SH + O2 = R'C(R)S-S(R)CR' + H2O2. Functionally, catalyzes the oxidation of sulfhydryl groups in peptide and protein thiols to disulfides with the reduction of oxygen to hydrogen peroxide. Plays a role in disulfide bond formation in a variety of extracellular proteins. In fibroblasts, required for normal incorporation of laminin into the extracellular matrix, and thereby for normal cell-cell adhesion and cell migration. The protein is Sulfhydryl oxidase 1 (QSOX1) of Pongo abelii (Sumatran orangutan).